The primary structure comprises 327 residues: Probable cell division protein WhiA (327 aa).

A DNA-binding region (H-T-H motif) is located at residues 275 to 308 (SLEELGRLADPQMTKDAVAGRIRRLLTMADKRAE).

It belongs to the WhiA family.

Functionally, involved in cell division and chromosome segregation. In Corynebacterium glutamicum (strain ATCC 13032 / DSM 20300 / JCM 1318 / BCRC 11384 / CCUG 27702 / LMG 3730 / NBRC 12168 / NCIMB 10025 / NRRL B-2784 / 534), this protein is Probable cell division protein WhiA.